Here is a 140-residue protein sequence, read N- to C-terminus: Ribonucleases P/MRP protein subunit POP7 (140 aa).

Residues 1–21 (MALKKNTHNKSTKRVTKHPSL) form a disordered region. Residue serine 115 is modified to Phosphoserine.

Belongs to the histone-like Alba family. Component of nuclear RNase P and RNase MRP complexes. RNase P consists of an RNA moiety and at least 9 protein subunits including POP1, POP3, POP4, POP5, POP6, POP7, POP8, RPP1 and RPR2. RNase MRP complex consists of an RNA moiety and at least 10 protein subunits including POP1, POP3, POP4, POP5, POP6, POP7, POP8, RMP1, RPP1 and SNM1, many of which are shared with the RNase P complex.

The protein localises to the nucleus. It carries out the reaction Endonucleolytic cleavage of RNA, removing 5'-extranucleotides from tRNA precursor.. In terms of biological role, component of ribonuclease P, a protein complex that generates mature tRNA molecules by cleaving their 5'-ends. Also a component of RNase MRP, which cleaves pre-rRNA sequences. The chain is Ribonucleases P/MRP protein subunit POP7 (POP7) from Saccharomyces cerevisiae (strain ATCC 204508 / S288c) (Baker's yeast).